The following is a 321-amino-acid chain: Ribosomal RNA small subunit methyltransferase H (321 aa).

Residues Gly40 to His42, Asp60, Phe84, Asp106, and Gln113 each bind S-adenosyl-L-methionine.

The protein belongs to the methyltransferase superfamily. RsmH family.

The protein localises to the cytoplasm. The enzyme catalyses cytidine(1402) in 16S rRNA + S-adenosyl-L-methionine = N(4)-methylcytidine(1402) in 16S rRNA + S-adenosyl-L-homocysteine + H(+). Specifically methylates the N4 position of cytidine in position 1402 (C1402) of 16S rRNA. The sequence is that of Ribosomal RNA small subunit methyltransferase H from Haemophilus influenzae (strain PittEE).